A 122-amino-acid polypeptide reads, in one-letter code: Large ribosomal subunit protein bL20 (122 aa).

This sequence belongs to the bacterial ribosomal protein bL20 family.

Binds directly to 23S ribosomal RNA and is necessary for the in vitro assembly process of the 50S ribosomal subunit. It is not involved in the protein synthesizing functions of that subunit. The sequence is that of Large ribosomal subunit protein bL20 from Saccharopolyspora erythraea (strain ATCC 11635 / DSM 40517 / JCM 4748 / NBRC 13426 / NCIMB 8594 / NRRL 2338).